A 644-amino-acid chain; its full sequence is Protein FAM149B1 (644 aa).

Disordered stretches follow at residues 392-490, 551-575, and 609-644; these read NQSD…NTLL, TFRSDTPYHRSFTGIDNIGQGRPGR, and GHFPIGHEEEPDAKASGQARSHNRGGSTARSSRPGL. The segment covering 395–404 has biased composition (basic and acidic residues); sequence DCRDSEDKVS. The segment covering 449 to 459 has biased composition (polar residues); that stretch reads PITSSVTQPIT. A compositionally biased stretch (polar residues) spans 626–644; that stretch reads QARSHNRGGSTARSSRPGL.

Belongs to the FAM149 family.

The chain is Protein FAM149B1 (fam149b1) from Danio rerio (Zebrafish).